Here is a 380-residue protein sequence, read N- to C-terminus: Cytochrome b (380 aa).

A run of 4 helical transmembrane segments spans residues 34–54 (FGSLLGICLLTQILTGLLLAM), 78–99 (WLIRNLHANGASFFFICIYLHI), 114–134 (WNTGVILLLTLMATAFVGYVL), and 179–199 (FFALHFLLPFMIAGLTLIHLT). Positions 84 and 98 each coordinate heme b. Residues His-183 and His-197 each coordinate heme b. His-202 is a binding site for a ubiquinone. Helical transmembrane passes span 227 to 247 (LKDILGFMLLLLPLTTLALFS), 289 to 309 (LGGVLALAASVLVLFLAPFLH), 321 to 341 (ISQLLFWILVANLFILTWVGS), and 348 to 368 (FIIIGQLASLTYFTILLILFP).

Belongs to the cytochrome b family. As to quaternary structure, the cytochrome bc1 complex contains 11 subunits: 3 respiratory subunits (MT-CYB, CYC1 and UQCRFS1), 2 core proteins (UQCRC1 and UQCRC2) and 6 low-molecular weight proteins (UQCRH/QCR6, UQCRB/QCR7, UQCRQ/QCR8, UQCR10/QCR9, UQCR11/QCR10 and a cleavage product of UQCRFS1). This cytochrome bc1 complex then forms a dimer. The cofactor is heme b.

It is found in the mitochondrion inner membrane. Its function is as follows. Component of the ubiquinol-cytochrome c reductase complex (complex III or cytochrome b-c1 complex) that is part of the mitochondrial respiratory chain. The b-c1 complex mediates electron transfer from ubiquinol to cytochrome c. Contributes to the generation of a proton gradient across the mitochondrial membrane that is then used for ATP synthesis. The chain is Cytochrome b (MT-CYB) from Puffinus opisthomelas (Black-vented shearwater).